The primary structure comprises 356 residues: Homoserine O-acetyltransferase (356 aa).

The region spanning 49-337 (VLICHALTGS…KSTHGHDAFL (289 aa)) is the AB hydrolase-1 domain. The Nucleophile role is filled by S143. Residue R212 coordinates substrate. Residues D304 and H333 contribute to the active site. D334 contributes to the substrate binding site.

Belongs to the AB hydrolase superfamily. MetX family. Homodimer.

The protein localises to the cytoplasm. The catalysed reaction is L-homoserine + acetyl-CoA = O-acetyl-L-homoserine + CoA. It participates in amino-acid biosynthesis; L-methionine biosynthesis via de novo pathway; O-acetyl-L-homoserine from L-homoserine: step 1/1. Transfers an acetyl group from acetyl-CoA to L-homoserine, forming acetyl-L-homoserine. The polypeptide is Homoserine O-acetyltransferase (Nostoc punctiforme (strain ATCC 29133 / PCC 73102)).